The primary structure comprises 1087 residues: MADPVQSLAQLEILCKQLYETTDTSTRLQAEKALVEFTNSPECLSKCQLLLERGSSSYSQLLAATCLTKLVSRSTNPLPLEQRIDIRNYVLTYLATRPKLASFVTQALIQLYARITKLGWFDSQKDDFVFRNVIGDVTRFLQDSVEYCVIGVSFLSQLTNEINQADATHPLTKHRKIASSFRDSALFDIFTLSCNLLKQASGKSLLLSDESQHDLLMQLLKLTHNCLNFDFIGTSTDESSDDLCTVQIPTSWRSAFLDSSTLQLFFDLYHSIPPNFTPLVLSCLVQIASVRRSLFNNAERAKFLSHLVDGVKRILENPQSLSDPNNYHEFCRLLARLKSNYQLGELVKVENYPEVIRLIANFTVTSLQHWEFAPNSVHYLLSLWQRLAASVPYVKATEPHLLETYTPEVTKSYVTSRLESVHIILRDGLEDPLEDAGLVQQQLDQLSTIGRCEYDKTCALLVQLFDQSAQTYQELLQSGSAPSMELAVQEGRLTWLVYIIGAVIGGRVSFASTDEQDAMDGELVCRVLQLMNLTDSRLAQAGNEKLELSMLSFFEQFRKIYIGDQVQKSSKLYRRLSDVLGLNDETMVLSIFIGKIITNLKYWGRCEPITSKTLQLLNDLSIGYSSVRKLVKLSAVQFMLNNHTSEHFSFLGINSQSNMSDMRCRTTFYTALGRLLMVDLGEDEEQFSQFMMPLTAAFESLAQMFNSNNFNEQEAKRSLVGLVRDLRGIAFAFNAKSSFMMLFDWIYPAYMPILQRAIELWFHDPACTTPILKLMAELVHNRSQRLQFDVSSPNGILLFRETSKMITTYGNRILTLGELPKEQLYVLKLKGISICFSVLKAALSGNYVNFGVFRLYGDEALDNALQTFVKLLLSVPHSDLLDYPKLSQSYYSLLEVLTQDHMSFIASLEPHVIMYILSSISEGLTALDTMVCTGCCSCLDHIVTYLFKQLSRSGKKRGAPPPQESERFLHIMQQHPEMIQQMLSTVLNIIIFEDCRNQWSMSRPLLGLILLNEKYFSDLRSSIVSSQPPEKQQAMHLCFENLMEGIEGNLLTKNRDRFTQNLSAFRREVNDSMKNSSCGPNSNEMMS.

An Importin N-terminal domain is found at 30 to 96 (AEKALVEFTN…RNYVLTYLAT (67 aa)).

This sequence belongs to the exportin family.

The protein resides in the cytoplasm. It localises to the nucleus. Its function is as follows. Mediates the nuclear export of proteins (cargos) with broad substrate specificity. In Xenopus laevis (African clawed frog), this protein is Exportin-7-B (xpo7-b).